A 394-amino-acid chain; its full sequence is S-adenosylmethionine synthase (394 aa).

Histidine 16 lines the ATP pocket. Residue aspartate 18 participates in Mg(2+) binding. Glutamate 44 provides a ligand contact to K(+). Positions 57 and 99 each coordinate L-methionine. Residues 99-109 form a flexible loop region; it reads QSPDIAQGVDE. ATP contacts are provided by residues 173–175, 240–241, aspartate 249, 255–256, alanine 272, and lysine 276; these read DAK, RF, and RK. Position 249 (aspartate 249) interacts with L-methionine. Lysine 280 is a binding site for L-methionine.

This sequence belongs to the AdoMet synthase family. In terms of assembly, homotetramer; dimer of dimers. Mg(2+) is required as a cofactor. The cofactor is K(+).

It is found in the cytoplasm. The enzyme catalyses L-methionine + ATP + H2O = S-adenosyl-L-methionine + phosphate + diphosphate. Its pathway is amino-acid biosynthesis; S-adenosyl-L-methionine biosynthesis; S-adenosyl-L-methionine from L-methionine: step 1/1. Its function is as follows. Catalyzes the formation of S-adenosylmethionine (AdoMet) from methionine and ATP. The overall synthetic reaction is composed of two sequential steps, AdoMet formation and the subsequent tripolyphosphate hydrolysis which occurs prior to release of AdoMet from the enzyme. This Lacticaseibacillus paracasei (strain ATCC 334 / BCRC 17002 / CCUG 31169 / CIP 107868 / KCTC 3260 / NRRL B-441) (Lactobacillus paracasei) protein is S-adenosylmethionine synthase.